Reading from the N-terminus, the 482-residue chain is 7-deoxyloganetic acid glucosyl transferase (482 aa).

The active-site Proton acceptor is His22. An anthocyanidin is bound at residue His22. The active-site Charge relay is the Asp127. UDP-alpha-D-glucose-binding residues include Thr149, Ala362, Gln364, His379, Trp382, Asn383, Ser384, and Glu387. Position 402 (Ala402) interacts with an anthocyanidin. Residues Asp403 and Gln404 each coordinate UDP-alpha-D-glucose.

The protein belongs to the UDP-glycosyltransferase family. Expressed in the leaf internal phloem-associated parenchyma (IPAP) inside the mesophyll. Mostly observed in leaves, roots and stems, and, to a lower extent, in flowers.

It is found in the nucleus. The protein resides in the cytoplasm. It localises to the cytosol. The enzyme catalyses 7-deoxyloganetate + UDP-alpha-D-glucose = 7-deoxyloganate + UDP + H(+). The protein operates within alkaloid biosynthesis. Its function is as follows. Component of the seco-iridoid and derivatives monoterpenoid indole alkaloids (MIAs, e.g. vincristine, quinine, and strychnine) biosynthesis pathway. Catalyzes the glucosylation of 7-deoxyloganetic acid to form 7-deoxyloganic acid using UDP-glucose as the sugar donor. Inactive with loganetic acid, loganetin, iridodial, iridotrial, 8-OH-geraniol, jasmonic acid, gibberellic acid, indole acetic acid, salicylic acid, abscisic acid, zeatin and luteolin. The polypeptide is 7-deoxyloganetic acid glucosyl transferase (Catharanthus roseus (Madagascar periwinkle)).